The primary structure comprises 225 residues: Increased recombination centers protein 22 (225 aa).

Residues 1–24 (MRFFMLIGFNLLTALSSFCAAISA) form the signal peptide. Residues 25–169 (NNSDNVEHEQ…PTLFEIVSPP (145 aa)) are Lumenal-facing. The helical transmembrane segment at 170-190 (ISFFNPQFLSVQVIFLAIIGG) threads the bilayer. At 191 to 225 (VSYYYMKSKTNQRPSKKSATVKKVDESWLPETYKK) the chain is on the cytoplasmic side. The segment at 203-225 (RPSKKSATVKKVDESWLPETYKK) is disordered. A compositionally biased stretch (basic and acidic residues) spans 212 to 225 (KKVDESWLPETYKK).

The protein belongs to the IRC22 family.

Its subcellular location is the endoplasmic reticulum membrane. Functionally, is probably involved in a pathway contributing to genomic integrity. The protein is Increased recombination centers protein 22 (IRC22) of Saccharomyces cerevisiae (strain AWRI1631) (Baker's yeast).